A 119-amino-acid polypeptide reads, in one-letter code: Large ribosomal subunit protein bL20c (119 aa).

The protein belongs to the bacterial ribosomal protein bL20 family.

The protein resides in the plastid. The protein localises to the chloroplast. Its function is as follows. Binds directly to 23S ribosomal RNA and is necessary for the in vitro assembly process of the 50S ribosomal subunit. It is not involved in the protein synthesizing functions of that subunit. The chain is Large ribosomal subunit protein bL20c (rpl20) from Oryza sativa (Rice).